The chain runs to 357 residues: Uroporphyrinogen decarboxylase (357 aa).

Residues 27-31 (RQAGR), D77, Y154, T209, and H327 contribute to the substrate site.

This sequence belongs to the uroporphyrinogen decarboxylase family. As to quaternary structure, homodimer.

The protein resides in the cytoplasm. The catalysed reaction is uroporphyrinogen III + 4 H(+) = coproporphyrinogen III + 4 CO2. It participates in porphyrin-containing compound metabolism; protoporphyrin-IX biosynthesis; coproporphyrinogen-III from 5-aminolevulinate: step 4/4. In terms of biological role, catalyzes the decarboxylation of four acetate groups of uroporphyrinogen-III to yield coproporphyrinogen-III. The sequence is that of Uroporphyrinogen decarboxylase from Nitrosococcus oceani (strain ATCC 19707 / BCRC 17464 / JCM 30415 / NCIMB 11848 / C-107).